Consider the following 254-residue polypeptide: Ribonuclease HII (254 aa).

In terms of domain architecture, RNase H type-2 spans 46 to 234 (KLIAGIDEVG…VWMASAPQEV (189 aa)). Residues aspartate 52, glutamate 53, and aspartate 144 each coordinate a divalent metal cation.

The protein belongs to the RNase HII family. It depends on Mn(2+) as a cofactor. Requires Mg(2+) as cofactor.

It is found in the cytoplasm. The catalysed reaction is Endonucleolytic cleavage to 5'-phosphomonoester.. Its function is as follows. Endonuclease that specifically degrades the RNA of RNA-DNA hybrids. In Koribacter versatilis (strain Ellin345), this protein is Ribonuclease HII.